The following is a 232-amino-acid chain: 7-cyano-7-deazaguanine synthase (232 aa).

7-17 (LSGGLDSTVVT) lines the ATP pocket. C195, C206, C209, and C212 together coordinate Zn(2+).

The protein belongs to the QueC family. Requires Zn(2+) as cofactor.

The catalysed reaction is 7-carboxy-7-deazaguanine + NH4(+) + ATP = 7-cyano-7-deazaguanine + ADP + phosphate + H2O + H(+). The protein operates within purine metabolism; 7-cyano-7-deazaguanine biosynthesis. Its function is as follows. Catalyzes the ATP-dependent conversion of 7-carboxy-7-deazaguanine (CDG) to 7-cyano-7-deazaguanine (preQ(0)). The polypeptide is 7-cyano-7-deazaguanine synthase (Methanocaldococcus jannaschii (strain ATCC 43067 / DSM 2661 / JAL-1 / JCM 10045 / NBRC 100440) (Methanococcus jannaschii)).